The primary structure comprises 282 residues: Pantothenate synthetase (282 aa).

An ATP-binding site is contributed by 30–37 (MGALHQGH). Catalysis depends on His37, which acts as the Proton donor. Residue Gln61 participates in (R)-pantoate binding. Gln61 is a binding site for beta-alanine. 149-152 (GEKD) lines the ATP pocket. Gln155 serves as a coordination point for (R)-pantoate. ATP-binding positions include Leu178 and 186 to 189 (MSSR).

It belongs to the pantothenate synthetase family. As to quaternary structure, homodimer.

Its subcellular location is the cytoplasm. It carries out the reaction (R)-pantoate + beta-alanine + ATP = (R)-pantothenate + AMP + diphosphate + H(+). The protein operates within cofactor biosynthesis; (R)-pantothenate biosynthesis; (R)-pantothenate from (R)-pantoate and beta-alanine: step 1/1. In terms of biological role, catalyzes the condensation of pantoate with beta-alanine in an ATP-dependent reaction via a pantoyl-adenylate intermediate. This chain is Pantothenate synthetase, found in Flavobacterium psychrophilum (strain ATCC 49511 / DSM 21280 / CIP 103535 / JIP02/86).